The chain runs to 28 residues: U1-poneritoxin-Da4a (28 aa).

The residue at position 28 (Ala28) is an Alanine amide.

Expressed by the venom gland.

The protein localises to the secreted. Its function is as follows. Shows a broad spectrum of activity against both Gram-positive and Gram-negative bacteria. Also has antimicrobial activity against S.cerevisiae. Has insecticidal and non-hemolytic activity. This chain is U1-poneritoxin-Da4a, found in Dinoponera australis (Giant neotropical hunting ant).